The following is a 294-amino-acid chain: Transmembrane protein 178B (294 aa).

Residues 1–23 (MAAGKLLLYAGLSLSLCALGMLA) form the signal peptide. Helical transmembrane passes span 172-192 (AGFM…GMLG), 206-226 (LLFL…VAGI), and 252-272 (MFCA…CTLA).

This sequence belongs to the TMEM178 family.

It is found in the membrane. This chain is Transmembrane protein 178B (tmem178b), found in Danio rerio (Zebrafish).